The primary structure comprises 271 residues: Formamidopyrimidine-DNA glycosylase (271 aa).

Catalysis depends on Pro2, which acts as the Schiff-base intermediate with DNA. Glu3 serves as the catalytic Proton donor. Lys58 functions as the Proton donor; for beta-elimination activity in the catalytic mechanism. Positions 91, 110, and 152 each coordinate DNA. Residues 237 to 271 (RAYGRGGQPCTVCQTELKEIKLGQRTSVFCPSCQR) form an FPG-type zinc finger. Arg261 (proton donor; for delta-elimination activity) is an active-site residue.

Belongs to the FPG family. Monomer. It depends on Zn(2+) as a cofactor.

It carries out the reaction Hydrolysis of DNA containing ring-opened 7-methylguanine residues, releasing 2,6-diamino-4-hydroxy-5-(N-methyl)formamidopyrimidine.. The enzyme catalyses 2'-deoxyribonucleotide-(2'-deoxyribose 5'-phosphate)-2'-deoxyribonucleotide-DNA = a 3'-end 2'-deoxyribonucleotide-(2,3-dehydro-2,3-deoxyribose 5'-phosphate)-DNA + a 5'-end 5'-phospho-2'-deoxyribonucleoside-DNA + H(+). Its function is as follows. Involved in base excision repair of DNA damaged by oxidation or by mutagenic agents. Acts as a DNA glycosylase that recognizes and removes damaged bases. Has a preference for oxidized purines, such as 7,8-dihydro-8-oxoguanine (8-oxoG). Has AP (apurinic/apyrimidinic) lyase activity and introduces nicks in the DNA strand. Cleaves the DNA backbone by beta-delta elimination to generate a single-strand break at the site of the removed base with both 3'- and 5'-phosphates. This Hahella chejuensis (strain KCTC 2396) protein is Formamidopyrimidine-DNA glycosylase.